Reading from the N-terminus, the 210-residue chain is Large ribosomal subunit protein uL3 (210 aa).

The protein belongs to the universal ribosomal protein uL3 family. Part of the 50S ribosomal subunit. Forms a cluster with proteins L14 and L19.

Functionally, one of the primary rRNA binding proteins, it binds directly near the 3'-end of the 23S rRNA, where it nucleates assembly of the 50S subunit. This chain is Large ribosomal subunit protein uL3, found in Syntrophotalea carbinolica (strain DSM 2380 / NBRC 103641 / GraBd1) (Pelobacter carbinolicus).